An 845-amino-acid polypeptide reads, in one-letter code: Protein translocase subunit SecA (845 aa).

ATP-binding positions include Q88, 106 to 110 (GEGKT), and D495. The interval 804–838 (SNRANRPQKKAKRQPIVKPDKPGRNDPCPCGSGKK) is disordered. The span at 809-818 (RPQKKAKRQP) shows a compositional bias: basic residues. C831, C833, C842, and C843 together coordinate Zn(2+).

Belongs to the SecA family. As to quaternary structure, monomer and homodimer. Part of the essential Sec protein translocation apparatus which comprises SecA, SecYEG and auxiliary proteins SecDF. Other proteins may also be involved. Zn(2+) is required as a cofactor.

Its subcellular location is the cell inner membrane. It is found in the cytoplasm. The catalysed reaction is ATP + H2O + cellular proteinSide 1 = ADP + phosphate + cellular proteinSide 2.. Part of the Sec protein translocase complex. Interacts with the SecYEG preprotein conducting channel. Has a central role in coupling the hydrolysis of ATP to the transfer of proteins into and across the cell membrane, serving as an ATP-driven molecular motor driving the stepwise translocation of polypeptide chains across the membrane. This Halothermothrix orenii (strain H 168 / OCM 544 / DSM 9562) protein is Protein translocase subunit SecA.